Reading from the N-terminus, the 503-residue chain is MDFSIKGCDWSKGTANGFLTGKSDCIVLGVFEAQTLSGAALDIDEATKGLVSRVIKAGDIDGKLGKTLFLHEVSGIGASRVLLVGLGRQDAFSQKAYGDAAKVAWRALLGTKVVQVTFTLAQLPVPERASDWGVRAAILALRNETYKFTQMKSKPDAGAPALKRVVFSVDPADDKAAKVAAKQAVALANGMDLTRDLGNLPGNVCTPTYLANTAKKIAKDWGLKVDVLGLKQIQALKMGSFLSVAKGSVEPPQFIVLQYRGAAAKAAPVVLVGKGITFDSGGISLKPGEGMDEMKYDMCGAGSVLGTMRAVAEMGLKVNVVAIVPTCENMPAGNANKPGDIVTSMKGLTIEVLNTDAEGRLILCDALTYAERFKPAAVIDVATLTGACIIALGHHNTGLFSKDDALAGELLDASREAGDPAWRLPLDDEYQDQLKSNFADLANIGGRPAGSVTAACFLSRFAENYPWAHLDIAGTAWKSGAAKGATGRPVPLLAQFLIDRAGA.

2 residues coordinate Mn(2+): Lys-274 and Asp-279. Lys-286 is an active-site residue. Mn(2+) contacts are provided by Asp-297, Asp-356, and Glu-358. Arg-360 is a catalytic residue.

The protein belongs to the peptidase M17 family. Mn(2+) serves as cofactor.

The protein resides in the cytoplasm. It carries out the reaction Release of an N-terminal amino acid, Xaa-|-Yaa-, in which Xaa is preferably Leu, but may be other amino acids including Pro although not Arg or Lys, and Yaa may be Pro. Amino acid amides and methyl esters are also readily hydrolyzed, but rates on arylamides are exceedingly low.. The catalysed reaction is Release of an N-terminal amino acid, preferentially leucine, but not glutamic or aspartic acids.. Functionally, presumably involved in the processing and regular turnover of intracellular proteins. Catalyzes the removal of unsubstituted N-terminal amino acids from various peptides. This is Probable cytosol aminopeptidase from Burkholderia mallei (strain SAVP1).